Consider the following 226-residue polypeptide: ATP-dependent dethiobiotin synthetase BioD (226 aa).

12–17 (GIGKTV) contacts ATP. Residue Thr16 coordinates Mg(2+). Lys37 is an active-site residue. Thr41 is a substrate binding site. ATP is bound by residues Asp49, 108-111 (EGAG), 169-170 (GS), and 197-199 (PAG). 2 residues coordinate Mg(2+): Asp49 and Glu108.

This sequence belongs to the dethiobiotin synthetase family. As to quaternary structure, homodimer. The cofactor is Mg(2+).

Its subcellular location is the cytoplasm. The catalysed reaction is (7R,8S)-7,8-diammoniononanoate + CO2 + ATP = (4R,5S)-dethiobiotin + ADP + phosphate + 3 H(+). It functions in the pathway cofactor biosynthesis; biotin biosynthesis; biotin from 7,8-diaminononanoate: step 1/2. Functionally, catalyzes a mechanistically unusual reaction, the ATP-dependent insertion of CO2 between the N7 and N8 nitrogen atoms of 7,8-diaminopelargonic acid (DAPA, also called 7,8-diammoniononanoate) to form a ureido ring. This chain is ATP-dependent dethiobiotin synthetase BioD, found in Mycolicibacterium gilvum (strain PYR-GCK) (Mycobacterium gilvum (strain PYR-GCK)).